We begin with the raw amino-acid sequence, 271 residues long: Neurexophilin-1 (271 aa).

Residues 1–21 form the signal peptide; it reads MQAACWYVLLLLQPTVYLVTC. The tract at residues 22-97 is II; the sequence is ANLTNGGKSE…WDWLRNSTDL (76 aa). N-linked (GlcNAc...) asparagine glycosylation is found at asparagine 23, asparagine 68, asparagine 93, asparagine 146, asparagine 156, and asparagine 162. The segment at 98–176 is III; the sequence is QEPRPRAKRR…LVPPTKIVEF (79 aa). The IV (linker domain) stretch occupies residues 177–185; sequence DLAQQTVID. A v (Cys-rich) region spans residues 186 to 271; that stretch reads AKDSKSFNCR…HSDTPYFPSG (86 aa).

Belongs to the neurexophilin family. In terms of processing, may be proteolytically processed at the boundary between the N-terminal non-conserved and the central conserved domain in neuron-like cells. In terms of tissue distribution, highest level in brain.

The protein localises to the secreted. Its function is as follows. May be signaling molecules that resemble neuropeptides. Ligand for alpha-neurexins. The protein is Neurexophilin-1 (Nxph1) of Rattus norvegicus (Rat).